We begin with the raw amino-acid sequence, 942 residues long: Alpha,alpha-trehalose-phosphate synthase [UDP-forming] 1 (942 aa).

The segment at 28–57 is disordered; the sequence is REKRKSNRARNPNDVAGSSENSENDLRLEG. The interval 92–559 is glycosyltransferase; the sequence is QRLLVVANRL…AETFVSELND (468 aa). The segment at 815–892 is disordered; that stretch reads DMPAIARSRP…LGNSRRPSPE (78 aa). 2 stretches are compositionally biased toward low complexity: residues 821-833 and 841-867; these read RSRP…AKSS and SKST…NKSS. The segment covering 879–888 has biased composition (polar residues); the sequence is SNHSLGNSRR.

It in the N-terminal section; belongs to the glycosyltransferase 20 family. This sequence in the C-terminal section; belongs to the trehalose phosphatase family. Expressed in seedlings, leaves, roots, stems, flowers and siliques.

The protein resides in the vacuole. Its subcellular location is the secreted. It is found in the cell wall. It localises to the cytoplasm. It carries out the reaction D-glucose 6-phosphate + UDP-alpha-D-glucose = alpha,alpha-trehalose 6-phosphate + UDP + H(+). In terms of biological role, required for normal embryo development, vegetative growth and transition to flowering. Regulates embryo growth, cell wall deposition, starch and sucrose degradation, but not cell differentiation. Involved in the regulation of glucose sensing and signaling genes during plant development. This is Alpha,alpha-trehalose-phosphate synthase [UDP-forming] 1 from Arabidopsis thaliana (Mouse-ear cress).